The primary structure comprises 381 residues: 2-epi-5-epi-valiolone synthase (381 aa).

NAD(+)-binding positions include aspartate 50, 81-84 (EEAK), 114-118 (GIVLD), 138-139 (TS), lysine 151, lysine 160, and 178-181 (FLDT). Residue lysine 151 is part of the active site. Residues glutamate 193, histidine 264, and histidine 280 each coordinate a divalent metal cation.

Belongs to the sugar phosphate cyclases superfamily. EEVS family. Requires NAD(+) as cofactor. Co(2+) serves as cofactor.

It catalyses the reaction D-sedoheptulose 7-phosphate = 2-epi-5-epi-valiolone + phosphate. Its pathway is antibiotic biosynthesis. Functionally, catalyzes the cyclization of D-sedoheptulose 7-phosphate to 2-epi-5-epi-valiolone. Involved in cetoniacytone A biosynthesis. The chain is 2-epi-5-epi-valiolone synthase from Actinomyces sp.